Consider the following 535-residue polypeptide: Cytochrome P450 monooxygenase atE (535 aa).

Cys-455 contributes to the heme binding site.

This sequence belongs to the cytochrome P450 family. It depends on heme as a cofactor.

The catalysed reaction is 3-methylcatechol + AH2 + O2 = 3-methylbenzene-1,2,4-triol + A + H2O. The protein operates within secondary metabolite biosynthesis. Its function is as follows. Cytochrome P450 monooxygenase; part of the gene cluster that mediates the biosynthesis of terreic acid, a quinone epoxide inhibitor of Bruton's tyrosine kinase. The first step of the pathway is the synthesis of 6-methylsalicylic acid (6-MSA) by the 6-methylsalicylic acid synthase atX. In the biosynthesis of 6-MSA, atX utilizes one acetyl-CoA and three malonyl-CoAs as its substrates and catalyzes a series of programmed reactions including Claisen condensation, reduction, aldol cyclization, and the hydrolytic cleavage that yields 6-MSA. The 6-methylsalicylate 1-monooxygenase atA then catalyzes the decarboxylative hydroxylation of 6-MSA to 3-methylcatechol. The next step is the conversion of 3-methylcatechol to 3-methyl-1,2,4-benzenetriol by cytochrome P450 monooxygenase atE, which is enhanced by cytochrome P450 monooxygenase atG. Then, the epoxidase atD catalyzes the epoxidation and hydroxyl oxidation of 3-methyl-1,2,4-benzenetriol to terremutin. Lastly, GMC oxidoreductase atC oxidizes terremutin to terreic acid. The sequence is that of Cytochrome P450 monooxygenase atE from Aspergillus terreus (strain NIH 2624 / FGSC A1156).